Reading from the N-terminus, the 173-residue chain is RNA 2',3'-cyclic phosphodiesterase (173 aa).

His-38 acts as the Proton donor in catalysis. 2 consecutive short sequence motifs (HXTX) follow at residues 38–41 (HITV) and 118–121 (HLTI). His-118 acts as the Proton acceptor in catalysis.

It belongs to the 2H phosphoesterase superfamily. ThpR family.

The enzyme catalyses a 3'-end 2',3'-cyclophospho-ribonucleotide-RNA + H2O = a 3'-end 2'-phospho-ribonucleotide-RNA + H(+). Its function is as follows. Hydrolyzes RNA 2',3'-cyclic phosphodiester to an RNA 2'-phosphomonoester. The polypeptide is RNA 2',3'-cyclic phosphodiesterase (Methanocaldococcus jannaschii (strain ATCC 43067 / DSM 2661 / JAL-1 / JCM 10045 / NBRC 100440) (Methanococcus jannaschii)).